The chain runs to 116 residues: Protein lin-52 homolog (116 aa).

Residues serine 28 and serine 53 each carry the phosphoserine modification.

The protein belongs to the lin-52 family. As to quaternary structure, component of the DREAM complex (also named LINC complex) at least composed of E2F4, E2F5, LIN9, LIN37, LIN52, LIN54, MYBL1, MYBL2, RBL1, RBL2, RBBP4, TFDP1 and TFDP2. The complex exists in quiescent cells where it represses cell cycle-dependent genes. It dissociates in S phase when LIN9, LIN37, LIN52 and LIN54 form a subcomplex that binds to MYBL2.

The sequence is that of Protein lin-52 homolog (LIN52) from Homo sapiens (Human).